Consider the following 143-residue polypeptide: Deoxyuridine 5'-triphosphate nucleotidohydrolase (143 aa).

It belongs to the dUTPase family. Mg(2+) serves as cofactor.

The catalysed reaction is dUTP + H2O = dUMP + diphosphate + H(+). In terms of biological role, this enzyme is involved in nucleotide metabolism: it produces dUMP, the immediate precursor of thymidine nucleotides and it decreases the intracellular concentration of dUTP so that uracil cannot be incorporated into DNA. This Yaba monkey tumor virus (strain VR587) (YMTV) protein is Deoxyuridine 5'-triphosphate nucleotidohydrolase (DUT).